The following is a 429-amino-acid chain: 3-phosphoshikimate 1-carboxyvinyltransferase (429 aa).

3-phosphoshikimate-binding residues include K23, S24, and R28. K23 contacts phosphoenolpyruvate. 2 residues coordinate phosphoenolpyruvate: G95 and R123. The 3-phosphoshikimate site is built by S168, Q170, D316, and K343. Residue Q170 participates in phosphoenolpyruvate binding. D316 serves as the catalytic Proton acceptor. Phosphoenolpyruvate is bound by residues R347 and R389.

Belongs to the EPSP synthase family. Monomer.

The protein resides in the cytoplasm. The enzyme catalyses 3-phosphoshikimate + phosphoenolpyruvate = 5-O-(1-carboxyvinyl)-3-phosphoshikimate + phosphate. Its pathway is metabolic intermediate biosynthesis; chorismate biosynthesis; chorismate from D-erythrose 4-phosphate and phosphoenolpyruvate: step 6/7. Functionally, catalyzes the transfer of the enolpyruvyl moiety of phosphoenolpyruvate (PEP) to the 5-hydroxyl of shikimate-3-phosphate (S3P) to produce enolpyruvyl shikimate-3-phosphate and inorganic phosphate. The chain is 3-phosphoshikimate 1-carboxyvinyltransferase from Bacillus cereus (strain G9842).